Reading from the N-terminus, the 164-residue chain is uncharacterized protein (164 aa).

The region spanning 1-129 (MGEVRVVGIR…AVLAQAGLLI (129 aa)) is the BFN domain.

This is an uncharacterized protein from Mycobacterium tuberculosis (strain CDC 1551 / Oshkosh).